We begin with the raw amino-acid sequence, 492 residues long: Serine carboxypeptidase-like 31 (492 aa).

Residues 1-30 (MDNYQTKNISNLLTSLCFTTLLILAPVVIC) form the signal peptide. 3 disulfides stabilise this stretch: cysteine 105–cysteine 376, cysteine 270–cysteine 283, and cysteine 307–cysteine 344. Asparagine 156 carries an N-linked (GlcNAc...) asparagine glycan. Serine 198 is a catalytic residue. N-linked (GlcNAc...) asparagine glycans are attached at residues asparagine 221 and asparagine 271. Residues asparagine 372 and asparagine 383 are each glycosylated (N-linked (GlcNAc...) asparagine). Catalysis depends on residues aspartate 413 and histidine 465.

The protein belongs to the peptidase S10 family. In terms of tissue distribution, expressed in roots, senescent leaves, stems, flowers and siliques.

The protein resides in the secreted. Functionally, probable carboxypeptidase. This Arabidopsis thaliana (Mouse-ear cress) protein is Serine carboxypeptidase-like 31 (SCPL31).